The following is a 158-amino-acid chain: Trafficking protein particle complex subunit 6B (158 aa).

It belongs to the TRAPP small subunits family. BET3 subfamily. Homodimer. Part of a TRAPP complex. Heterodimer with TRAPPC3. The heterodimer TRAPPC6B-TRAPPC3 interacts with TRAPPC1 likely providing a core for TRAPP complex formation.

The protein resides in the golgi apparatus. It is found in the cis-Golgi network. The protein localises to the endoplasmic reticulum. In terms of biological role, component of a transport protein particle (TRAPP) complex that may function in specific stages of inter-organelle traffic. Specifically involved in the early development of neural circuitry, likely by controlling the frequency and amplitude of intracellular calcium transients implicated in the regulation of neuron differentiation and survival. This Bos taurus (Bovine) protein is Trafficking protein particle complex subunit 6B.